We begin with the raw amino-acid sequence, 229 residues long: tRNA (guanine-N(1)-)-methyltransferase (229 aa).

S-adenosyl-L-methionine-binding positions include Gly-109 and 129–134; that span reads IGDFIL.

The protein belongs to the RNA methyltransferase TrmD family. In terms of assembly, homodimer.

The protein resides in the cytoplasm. It catalyses the reaction guanosine(37) in tRNA + S-adenosyl-L-methionine = N(1)-methylguanosine(37) in tRNA + S-adenosyl-L-homocysteine + H(+). Its function is as follows. Specifically methylates guanosine-37 in various tRNAs. The chain is tRNA (guanine-N(1)-)-methyltransferase from Helicobacter pylori (strain Shi470).